Reading from the N-terminus, the 179-residue chain is Large ribosomal subunit protein uL5 (179 aa).

It belongs to the universal ribosomal protein uL5 family. In terms of assembly, part of the 50S ribosomal subunit; part of the 5S rRNA/L5/L18/L25 subcomplex. Contacts the 5S rRNA and the P site tRNA. Forms a bridge to the 30S subunit in the 70S ribosome.

Its function is as follows. This is one of the proteins that bind and probably mediate the attachment of the 5S RNA into the large ribosomal subunit, where it forms part of the central protuberance. In the 70S ribosome it contacts protein S13 of the 30S subunit (bridge B1b), connecting the 2 subunits; this bridge is implicated in subunit movement. Contacts the P site tRNA; the 5S rRNA and some of its associated proteins might help stabilize positioning of ribosome-bound tRNAs. The chain is Large ribosomal subunit protein uL5 from Prochlorococcus marinus (strain MIT 9313).